The following is a 233-amino-acid chain: MASSSDPWMREYNEALKLSEDINGMMSERNASGLTGPDAQRRASAIRRKITILGTRLDSLQSLLVKVPGKQHVSEKEMNRRKDMVGNLRSKTNQVASALNMSNFANRDSLFGTDLKPDDAINRVSGMDNQGIVVFQRQVMREQDEGLEKLEETVMSTKHIALAVNEELTLQTRLIDDLDYDVDITDSRLRRVQKSLALMNKSMKSGCSCMSMLLSVLGIVGLALVIWLLVKYL.

Over 1-209 the chain is Cytoplasmic; that stretch reads MASSSDPWMR…NKSMKSGCSC (209 aa). In terms of domain architecture, t-SNARE coiled-coil homology spans 137–199; that stretch reads RQVMREQDEG…RRVQKSLALM (63 aa). A helical; Anchor for type IV membrane protein transmembrane segment spans residues 210 to 230; that stretch reads MSMLLSVLGIVGLALVIWLLV. Topologically, residues 231–233 are vesicular; it reads KYL.

Belongs to the syntaxin family. Interacts either with VTI11 and SYP21, or with VTI11 and SYP22 in the prevacuolar compartment, or with VTI12 and SYP61 in the trans-Golgi network to form t-SNARE complexes. In terms of tissue distribution, expressed in root, leaf, stem, flower and silique.

It is found in the golgi apparatus. The protein localises to the trans-Golgi network membrane. The protein resides in the prevacuolar compartment membrane. Functionally, vesicle trafficking protein that functions in the secretory pathway. The chain is Syntaxin-52 (SYP52) from Arabidopsis thaliana (Mouse-ear cress).